We begin with the raw amino-acid sequence, 1105 residues long: Lysylphosphatidylglycerol biosynthesis bifunctional protein LysX (1105 aa).

Residues 1–603 (MTVTKPRSVQ…LLHHDGSAPD (603 aa)) form a phosphatidylglycerol lysyltransferase region. Helical transmembrane passes span 20 to 40 (VPAA…LASI), 62 to 82 (FPDT…ALAA), 86 to 106 (IAWL…AADI), 117 to 137 (FGEN…VLGY), 154 to 174 (AVLV…VDLF), 186 to 203 (YVAN…DLFT), and 208 to 228 (VFLN…ATIV). Residues 604-1105 (VSGLRQSAIA…TLPFPLAKPH (502 aa)) are lysine--tRNA ligase. Aspartate 1017 and glutamate 1024 together coordinate Mg(2+).

In the N-terminal section; belongs to the LPG synthetase family. The protein in the C-terminal section; belongs to the class-II aminoacyl-tRNA synthetase family. The cofactor is Mg(2+).

Its subcellular location is the cell membrane. The catalysed reaction is tRNA(Lys) + L-lysine + ATP = L-lysyl-tRNA(Lys) + AMP + diphosphate. It catalyses the reaction L-lysyl-tRNA(Lys) + a 1,2-diacyl-sn-glycero-3-phospho-(1'-sn-glycerol) = a 1,2-diacyl-sn-glycero-3-phospho-1'-(3'-O-L-lysyl)-sn-glycerol + tRNA(Lys). Functionally, catalyzes the production of L-lysyl-tRNA(Lys)transfer and the transfer of a lysyl group from L-lysyl-tRNA(Lys) to membrane-bound phosphatidylglycerol (PG), which produces lysylphosphatidylglycerol (LPG), one of the components of the bacterial membrane with a positive net charge. LPG synthesis contributes to the resistance to cationic antimicrobial peptides (CAMPs) and likely protects M.tuberculosis against the CAMPs produced by competiting microorganisms (bacteriocins). In fact, the modification of anionic phosphatidylglycerol with positively charged L-lysine results in repulsion of the peptides. This Mycobacterium ulcerans (strain Agy99) protein is Lysylphosphatidylglycerol biosynthesis bifunctional protein LysX (lysX).